A 345-amino-acid chain; its full sequence is Dihydroorotase (345 aa).

Residues His-14 and His-16 each contribute to the Zn(2+) site. Substrate is bound by residues 16–18 and Asn-42; that span reads HLR. The Zn(2+) site is built by Lys-100, His-137, and His-175. Lys-100 is subject to N6-carboxylysine. Substrate is bound at residue His-137. Leu-220 provides a ligand contact to substrate. Asp-248 serves as a coordination point for Zn(2+). Residue Asp-248 is part of the active site. Positions 252 and 264 each coordinate substrate.

It belongs to the metallo-dependent hydrolases superfamily. DHOase family. Class II DHOase subfamily. In terms of assembly, homodimer. It depends on Zn(2+) as a cofactor.

It carries out the reaction (S)-dihydroorotate + H2O = N-carbamoyl-L-aspartate + H(+). It participates in pyrimidine metabolism; UMP biosynthesis via de novo pathway; (S)-dihydroorotate from bicarbonate: step 3/3. Its function is as follows. Catalyzes the reversible cyclization of carbamoyl aspartate to dihydroorotate. The polypeptide is Dihydroorotase (Methylobacillus flagellatus (strain ATCC 51484 / DSM 6875 / VKM B-1610 / KT)).